A 125-amino-acid polypeptide reads, in one-letter code: Histone H1-like protein Hc1 (125 aa).

The interval 98-125 (TKAKVKPTKKAAPKTKVKTAKKTRSTKK) is disordered. A compositionally biased stretch (basic residues) spans 100–125 (AKVKPTKKAAPKTKVKTAKKTRSTKK).

The protein belongs to the histone H1/H5 family. HCT subfamily.

In terms of biological role, might have a role analogous to that of eukaryotic histone proteins. The chain is Histone H1-like protein Hc1 (hctA) from Chlamydia trachomatis serovar L2 (strain ATCC VR-902B / DSM 19102 / 434/Bu).